Reading from the N-terminus, the 329-residue chain is Serine/threonine-protein phosphatase PP1-alpha (329 aa).

The Mn(2+) site is built by Asp-64, His-66, Asp-92, and Asn-124. His-125 (proton donor) is an active-site residue. The Mn(2+) site is built by His-173 and His-248. The interval 309–329 is disordered; sequence GMNSGRPAVGGGRPGTTAGKK.

The protein belongs to the PPP phosphatase family. PP-1 subfamily. As to quaternary structure, interacts with lab-1; the interaction is direct. Interacts with knl-1; the interaction is direct. The cofactor is Mn(2+).

The catalysed reaction is O-phospho-L-seryl-[protein] + H2O = L-seryl-[protein] + phosphate. It catalyses the reaction O-phospho-L-threonyl-[protein] + H2O = L-threonyl-[protein] + phosphate. Its function is as follows. Serine/threonine-protein phosphatase which antagonizes the function of air-2 in the regulation of chromosome cohesion. Dephosphorylates histone H3 at 'Ser-10'. Dephosphorylates translation initiation factor eIF2alpha. Involved in the activation of chloride channel clh-3 during cell swelling and meiotic maturation. This Caenorhabditis briggsae protein is Serine/threonine-protein phosphatase PP1-alpha (gsp-1).